The chain runs to 46 residues: Small polypeptide DEVIL 5 (46 aa).

A helical membrane pass occupies residues 8–24 (VGGTKRKMWSRGVGGVV). The segment at 15-46 (MWSRGVGGVVREQKAKLYIIRRCVVMLLCWHD) is required for DVL/RTFL small polypeptide activity.

It belongs to the DVL/RTFL small polypeptides family. Mostly expressed in roots and flowers, and, to a lower extent, in leaves and stems.

The protein resides in the cell membrane. Functionally, small polypeptide acting as a regulatory molecule which coordinates cellular responses required for differentiation, growth and development, including leaves shape, pedicule elongation, inflorescence organization and fruit maturation, probably by restricting polar cell proliferation in lateral organs and coordinating socket cell recruitment and differentiation at trichome sites. The sequence is that of Small polypeptide DEVIL 5 from Arabidopsis thaliana (Mouse-ear cress).